A 163-amino-acid chain; its full sequence is Protein FAM167B (163 aa).

Residues 73 to 132 (FDSMDSALEWLRRELREMQAQDRQLAGQLLRLRAQLHRLKMDQACHLHQELLDEAELELE) are a coiled coil.

It belongs to the FAM167 (SEC) family.

The protein is Protein FAM167B (FAM167B) of Homo sapiens (Human).